We begin with the raw amino-acid sequence, 422 residues long: UDP-N-acetylglucosamine 1-carboxyvinyltransferase (422 aa).

22-23 (KN) serves as a coordination point for phosphoenolpyruvate. R95 serves as a coordination point for UDP-N-acetyl-alpha-D-glucosamine. Residue C119 is the Proton donor of the active site. Position 119 is a 2-(S-cysteinyl)pyruvic acid O-phosphothioketal (C119). Residues 124 to 128 (RPIDQ), D309, and V331 contribute to the UDP-N-acetyl-alpha-D-glucosamine site.

This sequence belongs to the EPSP synthase family. MurA subfamily.

Its subcellular location is the cytoplasm. It carries out the reaction phosphoenolpyruvate + UDP-N-acetyl-alpha-D-glucosamine = UDP-N-acetyl-3-O-(1-carboxyvinyl)-alpha-D-glucosamine + phosphate. Its pathway is cell wall biogenesis; peptidoglycan biosynthesis. Cell wall formation. Adds enolpyruvyl to UDP-N-acetylglucosamine. This is UDP-N-acetylglucosamine 1-carboxyvinyltransferase from Anaeromyxobacter sp. (strain K).